Reading from the N-terminus, the 380-residue chain is Acetylornithine deacetylase (380 aa).

H79 is a Zn(2+) binding site. The active site involves D81. D109 lines the Zn(2+) pocket. E139 is a catalytic residue. 3 residues coordinate Zn(2+): E140, E164, and H351.

The protein belongs to the peptidase M20A family. ArgE subfamily. In terms of assembly, homodimer. Requires Zn(2+) as cofactor. Co(2+) serves as cofactor. Glutathione is required as a cofactor.

Its subcellular location is the cytoplasm. It catalyses the reaction N(2)-acetyl-L-ornithine + H2O = L-ornithine + acetate. It functions in the pathway amino-acid biosynthesis; L-arginine biosynthesis; L-ornithine from N(2)-acetyl-L-ornithine (linear): step 1/1. Functionally, catalyzes the hydrolysis of the amide bond of N(2)-acetylated L-amino acids. Cleaves the acetyl group from N-acetyl-L-ornithine to form L-ornithine, an intermediate in L-arginine biosynthesis pathway, and a branchpoint in the synthesis of polyamines. This is Acetylornithine deacetylase from Myxococcus xanthus.